The chain runs to 49 residues: Large ribosomal subunit protein bL33B (49 aa).

This sequence belongs to the bacterial ribosomal protein bL33 family.

The chain is Large ribosomal subunit protein bL33B from Bacillus cereus (strain ATCC 14579 / DSM 31 / CCUG 7414 / JCM 2152 / NBRC 15305 / NCIMB 9373 / NCTC 2599 / NRRL B-3711).